We begin with the raw amino-acid sequence, 1066 residues long: UPF0182 protein BL1029 (1066 aa).

The interval 12 to 74 (GNGGDSRRNN…KPASGGSGGS (63 aa)) is disordered. Low complexity predominate over residues 44–61 (NAGPSGSSRPPRGPANPR). 7 helical membrane passes run 77 to 97 (SKIL…FFGL), 126 to 146 (LWVA…WLAI), 179 to 199 (VAVV…NANW), 235 to 255 (VLAA…VTHV), 282 to 302 (LGIW…IGVF), 326 to 346 (VTFI…IWLM), and 372 to 392 (VTSI…WPVL). Residues 977 to 1044 (DSGAAAGDAE…SQSAMKNGDW (68 aa)) are disordered. The segment covering 989–998 (SGDQSGSDTN) has biased composition (polar residues). A compositionally biased stretch (low complexity) spans 1003–1016 (GTTDGKSDSGSSSD).

The protein belongs to the UPF0182 family.

The protein localises to the cell membrane. The polypeptide is UPF0182 protein BL1029 (Bifidobacterium longum (strain NCC 2705)).